We begin with the raw amino-acid sequence, 269 residues long: Tryptophan synthase alpha chain (269 aa).

Residues E49 and D60 each act as proton acceptor in the active site.

The protein belongs to the TrpA family. Tetramer of two alpha and two beta chains.

The enzyme catalyses (1S,2R)-1-C-(indol-3-yl)glycerol 3-phosphate + L-serine = D-glyceraldehyde 3-phosphate + L-tryptophan + H2O. The protein operates within amino-acid biosynthesis; L-tryptophan biosynthesis; L-tryptophan from chorismate: step 5/5. The alpha subunit is responsible for the aldol cleavage of indoleglycerol phosphate to indole and glyceraldehyde 3-phosphate. The polypeptide is Tryptophan synthase alpha chain (Enterobacter sp. (strain 638)).